Here is a 284-residue protein sequence, read N- to C-terminus: Nucleotide-binding protein Sbal195_0713 (284 aa).

An ATP-binding site is contributed by 8–15 (GRSGSGKS). 56–59 (DVRN) is a GTP binding site.

It belongs to the RapZ-like family.

Functionally, displays ATPase and GTPase activities. This chain is Nucleotide-binding protein Sbal195_0713, found in Shewanella baltica (strain OS195).